The primary structure comprises 488 residues: Coagulation factor X (488 aa).

The first 31 residues, 1–31 (MGRPLHLVLLSASLAGLLLLGESLFIRREQA), serve as a signal peptide directing secretion. A propeptide spanning residues 32-40 (NNILARVTR) is cleaved from the precursor. A Gla domain is found at 41 to 85 (ANSFLEEMKKGHLERECMEETCSYEEAREVFEDSDKTNEFWNKYK). A 4-carboxyglutamate mark is found at glutamate 46, glutamate 47, glutamate 54, glutamate 56, glutamate 59, glutamate 60, glutamate 65, glutamate 66, glutamate 69, glutamate 72, and glutamate 79. Cysteine 57 and cysteine 62 are oxidised to a cystine. In terms of domain architecture, EGF-like 1; calcium-binding spans 86–122 (DGDQCETSPCQNQGKCKDGLGEYTCTCLEGFEGKNCE). 11 disulfides stabilise this stretch: cysteine 90-cysteine 101, cysteine 95-cysteine 110, cysteine 112-cysteine 121, cysteine 129-cysteine 140, cysteine 136-cysteine 149, cysteine 151-cysteine 164, cysteine 172-cysteine 342, cysteine 241-cysteine 246, cysteine 261-cysteine 277, cysteine 390-cysteine 404, and cysteine 415-cysteine 443. The residue at position 103 (aspartate 103) is a (3R)-3-hydroxyaspartate. The region spanning 125 to 165 (TRKLCSLDNGDCDQFCHEEQNSVVCSCARGYTLADNGKACI) is the EGF-like 2 domain. Residues 183–203 (SVAQATSSSGEAPDSITWKPY) are O-glycosylated at one site. A propeptide spans 183–234 (SVAQATSSSGEAPDSITWKPYDAADLDPTENPFDLLDFNQTQPERGDNNLTR) (activation peptide). O-linked (GalNAc...) threonine glycans are attached at residues threonine 199 and threonine 211. 2 N-linked (GlcNAc...) asparagine glycosylation sites follow: asparagine 221 and asparagine 231. The Peptidase S1 domain occupies 235 to 467 (IVGGQECKDG…FLKWIDRSMK (233 aa)). Catalysis depends on charge relay system residues histidine 276 and aspartate 322. Serine 419 (charge relay system) is an active-site residue. An O-glycosylated at one site region spans residues 476–485 (SHAPEVITSS).

This sequence belongs to the peptidase S1 family. As to quaternary structure, the two chains are formed from a single-chain precursor by the excision of two Arg residues and are held together by 1 or more disulfide bonds. Forms a heterodimer with SERPINA5. Interacts (inactive and activated) with ixolaris, an anticoagulant protein from Ixodes scapularis saliva. Interacts (activated) with iripin-8, a serine protease inhibitor from Ixodes ricinus saliva. Interacts (activated) with FXa-directed anticoagulant from Aedes albopictus saliva. Interacts (activated) with guianensin, an anticoagulant protein from Simulium guianense saliva. Interacts (activated) with simukunin, an anticoagulant protein from Simulium vittatum saliva. Post-translationally, the vitamin K-dependent, enzymatic carboxylation of some glutamate residues allows the modified protein to bind calcium. N- and O-glycosylated. O-glycosylated with core 1 or possibly core 8 glycans. In terms of processing, proteolytically cleaved and activated by cathepsin CTSG. The activation peptide is cleaved by factor IXa (in the intrinsic pathway), or by factor VIIa (in the extrinsic pathway). Post-translationally, the iron and 2-oxoglutarate dependent 3-hydroxylation of aspartate and asparagine is (R) stereospecific within EGF domains. In terms of tissue distribution, plasma; synthesized in the liver.

The protein localises to the secreted. It catalyses the reaction Selective cleavage of Arg-|-Thr and then Arg-|-Ile bonds in prothrombin to form thrombin.. Its activity is regulated as follows. Inhibited by SERPINA5 and SERPINA10. In terms of biological role, factor Xa is a vitamin K-dependent glycoprotein that converts prothrombin to thrombin in the presence of factor Va, calcium and phospholipid during blood clotting. Factor Xa activates pro-inflammatory signaling pathways in a protease-activated receptor (PAR)-dependent manner. Up-regulates expression of protease-activated receptors (PARs) F2R, F2RL1 and F2RL2 in dermal microvascular endothelial cells. Triggers the production of pro-inflammatory cytokines, such as MCP-1/CCL2 and IL6, in cardiac fibroblasts and umbilical vein endothelial cells in PAR-1/F2R-dependent manner. Triggers the production of pro-inflammatory cytokines, such as MCP-1/CCL2, IL6, TNF-alpha/TNF, IL-1beta/IL1B, IL8/CXCL8 and IL18, in endothelial cells and atrial tissues. Induces expression of adhesion molecules, such as ICAM1, VCAM1 and SELE, in endothelial cells and atrial tissues. Increases expression of phosphorylated ERK1/2 in dermal microvascular endothelial cells and atrial tissues. Triggers activation of the transcription factor NF-kappa-B in dermal microvascular endothelial cells and atrial tissues. Activates pro-inflammatory and pro-fibrotic responses in dermal fibroblasts and enhances wound healing probably via PAR-2/F2RL1-dependent mechanism. Activates barrier protective signaling responses in endothelial cells in PAR-2/F2RL1-dependent manner; the activity depends on the cleavage of PAR-2/F2RL1 by factor Xa. Up-regulates expression of plasminogen activator inhibitor 1 (SERPINE1) in atrial tissues. In Homo sapiens (Human), this protein is Coagulation factor X (F10).